We begin with the raw amino-acid sequence, 85 residues long: Kunitz-type serine protease inhibitor homolog beta-bungarotoxin B2a chain (85 aa).

The N-terminal stretch at 1 to 24 is a signal peptide; that stretch reads MSSGGLLLLLGLLTLWAELTPVSS. The region spanning 31 to 81 is the BPTI/Kunitz inhibitor domain; the sequence is CDKPPDTKICQTVVRAFYYKPSAKRCVQFRYGGCNGNGNHFKSDHLCRCEC. 3 cysteine pairs are disulfide-bonded: cysteine 31–cysteine 81, cysteine 40–cysteine 64, and cysteine 56–cysteine 77.

It belongs to the venom Kunitz-type family. As to quaternary structure, heterodimer; disulfide-linked. The A chain has phospholipase A2 activity and the B chain shows homology with the basic protease inhibitors. As to expression, expressed by the venom gland.

Its subcellular location is the secreted. Its function is as follows. Beta-bungarotoxin is a presynaptic neurotoxin of the venom. The B chain is homologous to venom basic protease inhibitors but has no protease inhibitor activity and is non-toxic. The polypeptide is Kunitz-type serine protease inhibitor homolog beta-bungarotoxin B2a chain (Bungarus candidus (Malayan krait)).